A 280-amino-acid chain; its full sequence is Undecaprenyl-diphosphatase (280 aa).

8 helical membrane passes run phenylalanine 2–leucine 22, alanine 45–isoleucine 65, tryptophan 86–leucine 106, phenylalanine 114–leucine 134, leucine 147–phenylalanine 167, serine 188–tryptophan 208, glycine 223–isoleucine 243, and phenylalanine 255–isoleucine 275.

The protein belongs to the UppP family.

The protein localises to the cell membrane. It catalyses the reaction di-trans,octa-cis-undecaprenyl diphosphate + H2O = di-trans,octa-cis-undecaprenyl phosphate + phosphate + H(+). Catalyzes the dephosphorylation of undecaprenyl diphosphate (UPP). Confers resistance to bacitracin. The protein is Undecaprenyl-diphosphatase of Streptococcus sanguinis (strain SK36).